The chain runs to 365 residues: PHD finger protein 6 (365 aa).

S2 is modified (N-acetylserine). 2 short sequence motifs (nuclear localization signal) span residues 13–16 (RQRK) and 129–133 (RKHKK). The C2HC pre-PHD-type 1 zinc-finger motif lies at 14–52 (QRKCGFCKSNRDKECGQLLISENQKVAAHHKCMLFSSAL). An extended PHD1 domain (ePHD1) region spans residues 14–132 (QRKCGFCKSN…IYMVYCRKHK (119 aa)). The PHD-type 1 zinc-finger motif lies at 80–132 (LMCSLCHCPGATIGCDVKTCHRTYHYHCALHDKAQIREKPSQGIYMVYCRKHK). S138, S145, and S155 each carry phosphoserine. The interval 139–211 (EADLEESFNE…RSSPSDTRPK (73 aa)) is disordered. The Nucleolar localization signal signature appears at 157–169 (KSKKKSRKGRPRK). Positions 157–171 (KSKKKSRKGRPRKTN) are enriched in basic residues. Residue K173 forms a Glycyl lysine isopeptide (Lys-Gly) (interchain with G-Cter in SUMO2) linkage. Phosphoserine is present on residues S183 and S199. The C2HC pre-PHD-type 2 zinc-finger motif lies at 209–249 (RPKCGFCHVGEEENQARGKLHIFNAKKAAAHYKCMLFSSGT). The tract at residues 209 to 330 (RPKCGFCHVG…IYKLYCKNHS (122 aa)) is extended PHD2 domain (ePHD2). K227 participates in a covalent cross-link: Glycyl lysine isopeptide (Lys-Gly) (interchain with G-Cter in SUMO2). The PHD-type 2 zinc-finger motif lies at 278–330 (MKCTLCSQPGATIGCEIKACVKTYHYHCGVQDKAKYIENMSRGIYKLYCKNHS). A disordered region spans residues 330–365 (SGNDERDEEDEERESKSRGKVEIDQQQLTQQQLNGN). Residues 342–352 (RESKSRGKVEI) show a composition bias toward basic and acidic residues. A compositionally biased stretch (low complexity) spans 354 to 365 (QQQLTQQQLNGN). A Phosphothreonine modification is found at T358.

As to quaternary structure, interacts with UBTF. Interacts with the NuRD complex component RBBP4 (via the nucleolar localization motif), the interaction mediates transcriptional repression activity.

The protein localises to the nucleus. It is found in the nucleolus. The protein resides in the chromosome. Its subcellular location is the centromere. It localises to the kinetochore. In terms of biological role, transcriptional regulator that associates with ribosomal RNA promoters and suppresses ribosomal RNA (rRNA) transcription. The protein is PHD finger protein 6 (PHF6) of Bos taurus (Bovine).